The primary structure comprises 260 residues: MTDPSAQNPDHELLDEPRLVVEPGVAARVAAIAAPVLQGMGYRLVRIKVSGEAGCTVQIMAERPDGSIQIEDCEAISKALSPVLDVADPIDKAYRLEISSPGIDRPLVRRSDFERYAGHLAKIEMAVAHQGRKRFRGVLQGVEDNAVRLHRDDIRNNDDESEVMLVMEDIADARLVLTDELIAESMRRGKIAEREMKQSLGILPPPPPHAKTDPAKRGTPKPKLENGKKAPGKIPPKNTKEHRLAAERLRRGDIDPIEGE.

The tract at residues 198–260 (QSLGILPPPP…RGDIDPIEGE (63 aa)) is disordered. Composition is skewed to basic and acidic residues over residues 210–228 (AKTD…ENGK) and 238–254 (NTKE…RGDI).

This sequence belongs to the RimP family.

It is found in the cytoplasm. In terms of biological role, required for maturation of 30S ribosomal subunits. In Nitrobacter winogradskyi (strain ATCC 25391 / DSM 10237 / CIP 104748 / NCIMB 11846 / Nb-255), this protein is Ribosome maturation factor RimP.